Here is a 65-residue protein sequence, read N- to C-terminus: Conotoxin Cal16.1 (65 aa).

Positions 1–19 (MRCLSIFVLLVLLVSFAVA) are cleaved as a signal peptide. A propeptide spanning residues 20–48 (ELDVEGEIVKQLLTRGTLKDADFWKRLEM) is cleaved from the precursor. Gln49 is subject to Pyrrolidone carboxylic acid. 2 disulfides stabilise this stretch: Cys51–Cys60 and Cys53–Cys61. The residue at position 63 (Glu63) is a Glutamic acid 1-amide.

Expressed by the venom duct.

The protein localises to the secreted. Probable neurotoxin with unknown target. Possibly targets ion channels. The sequence is that of Conotoxin Cal16.1 from Californiconus californicus (California cone).